The primary structure comprises 791 residues: Ribosome biogenesis protein ERB1 (791 aa).

Positions 1–12 (MARKNSSLNGSE) are enriched in polar residues. Disordered stretches follow at residues 1–60 (MARK…DDSD) and 68–87 (AEEENGQEEEYNTSDFSEEG). Composition is skewed to acidic residues over residues 25-60 (ESELSDSEDERIEVDGLIDEEASENEAEEAEDDDSD) and 69-87 (EEENGQEEEYNTSDFSEEG). The required for interaction with NOP7 stretch occupies residues 254 to 372 (RFVPSKHEAK…LRKVPGYSES (119 aa)). Residues 372 to 408 (SVRERFERSLDLYLAPRVRKNKLNIDPESLIPELPST) form a required for interaction with YTM1 region. WD repeat units lie at residues 424 to 463 (GHKGKIRTMSIDPTGLWLATGSDDGTVRVWEILTGREVYQ), 472 to 512 (NNDD…FEIE), 576 to 618 (TCRK…TQSP), 621 to 659 (KSKGIIMDAKFHPFKPQLLVCSQRYVRIYDLSQQVLIKK), 662 to 701 (PGARWLSTIDIHPRGDNLIASSFDKRVLWHDLDLASTPYK), 705 to 744 (YHEKAVRSVSFHKKLPLFCSAADDGNIHVFHATVYDDLMK), and 760 to 791 (VNSLGVLDTIWHPREAWLFSAGADKTARLWTT).

This sequence belongs to the WD repeat BOP1/ERB1 family. In terms of assembly, component of the NOP7 complex, composed of ERB1, NOP7 and YTM1. The complex is held together by ERB1, which interacts with NOP7 via its N-terminal domain and with YTM1 via a high-affinity interaction between the seven-bladed beta-propeller domains of the 2 proteins. The NOP7 complex associates with the 66S pre-ribosome.

It localises to the nucleus. The protein resides in the nucleolus. It is found in the nucleoplasm. Component of the NOP7 complex, which is required for maturation of the 25S and 5.8S ribosomal RNAs and formation of the 60S ribosome. This is Ribosome biogenesis protein ERB1 from Kluyveromyces lactis (strain ATCC 8585 / CBS 2359 / DSM 70799 / NBRC 1267 / NRRL Y-1140 / WM37) (Yeast).